Consider the following 342-residue polypeptide: Anthranilate phosphoribosyltransferase (342 aa).

5-phospho-alpha-D-ribose 1-diphosphate contacts are provided by residues glycine 79, 82–83, threonine 87, 89–92, 107–115, and serine 119; these read GD, NVST, and KHGNRAATS. Glycine 79 is a binding site for anthranilate. Serine 91 contacts Mg(2+). Residue asparagine 110 participates in anthranilate binding. Arginine 165 serves as a coordination point for anthranilate. The Mg(2+) site is built by aspartate 224 and glutamate 225.

Belongs to the anthranilate phosphoribosyltransferase family. Homodimer. The cofactor is Mg(2+).

The enzyme catalyses N-(5-phospho-beta-D-ribosyl)anthranilate + diphosphate = 5-phospho-alpha-D-ribose 1-diphosphate + anthranilate. It functions in the pathway amino-acid biosynthesis; L-tryptophan biosynthesis; L-tryptophan from chorismate: step 2/5. In terms of biological role, catalyzes the transfer of the phosphoribosyl group of 5-phosphorylribose-1-pyrophosphate (PRPP) to anthranilate to yield N-(5'-phosphoribosyl)-anthranilate (PRA). This Rubrobacter xylanophilus (strain DSM 9941 / JCM 11954 / NBRC 16129 / PRD-1) protein is Anthranilate phosphoribosyltransferase.